The following is a 394-amino-acid chain: Elongation factor Tu 1 (394 aa).

The 195-residue stretch at 10–204 (KPHVNVGTIG…ALDSYIPEPE (195 aa)) folds into the tr-type G domain. The G1 stretch occupies residues 19-26 (GHVDHGKT). 19–26 (GHVDHGKT) lines the GTP pocket. Thr-26 provides a ligand contact to Mg(2+). The G2 stretch occupies residues 60–64 (GITIN). The G3 stretch occupies residues 81–84 (DCPG). GTP-binding positions include 81 to 85 (DCPGH) and 136 to 139 (NKCD). Residues 136-139 (NKCD) form a G4 region. Residues 174-176 (SAL) are G5.

The protein belongs to the TRAFAC class translation factor GTPase superfamily. Classic translation factor GTPase family. EF-Tu/EF-1A subfamily. Monomer.

It is found in the cytoplasm. The enzyme catalyses GTP + H2O = GDP + phosphate + H(+). GTP hydrolase that promotes the GTP-dependent binding of aminoacyl-tRNA to the A-site of ribosomes during protein biosynthesis. The protein is Elongation factor Tu 1 of Shewanella sp. (strain MR-4).